The chain runs to 483 residues: Aspartyl/glutamyl-tRNA(Asn/Gln) amidotransferase subunit B (483 aa).

It belongs to the GatB/GatE family. GatB subfamily. As to quaternary structure, heterotrimer of A, B and C subunits.

The enzyme catalyses L-glutamyl-tRNA(Gln) + L-glutamine + ATP + H2O = L-glutaminyl-tRNA(Gln) + L-glutamate + ADP + phosphate + H(+). The catalysed reaction is L-aspartyl-tRNA(Asn) + L-glutamine + ATP + H2O = L-asparaginyl-tRNA(Asn) + L-glutamate + ADP + phosphate + 2 H(+). Functionally, allows the formation of correctly charged Asn-tRNA(Asn) or Gln-tRNA(Gln) through the transamidation of misacylated Asp-tRNA(Asn) or Glu-tRNA(Gln) in organisms which lack either or both of asparaginyl-tRNA or glutaminyl-tRNA synthetases. The reaction takes place in the presence of glutamine and ATP through an activated phospho-Asp-tRNA(Asn) or phospho-Glu-tRNA(Gln). This is Aspartyl/glutamyl-tRNA(Asn/Gln) amidotransferase subunit B from Rickettsia conorii (strain ATCC VR-613 / Malish 7).